The chain runs to 273 residues: Large ribosomal subunit protein uL2cz/uL2cy (273 aa).

Residues 224 to 273 (NPVDHPHGGGEGRAPIGRKKPATPWGYPALGRRSRKRNKYSDRFILRRRK) are disordered. Over residues 262–273 (KYSDRFILRRRK) the composition is skewed to basic and acidic residues.

This sequence belongs to the universal ribosomal protein uL2 family. In terms of assembly, part of the 50S ribosomal subunit.

Its subcellular location is the plastid. It localises to the chloroplast. The sequence is that of Large ribosomal subunit protein uL2cz/uL2cy (rpl2-A) from Piper cenocladum (Ant piper).